Consider the following 226-residue polypeptide: Sugar fermentation stimulation protein homolog (226 aa).

It belongs to the SfsA family.

The chain is Sugar fermentation stimulation protein homolog from Ruminiclostridium cellulolyticum (strain ATCC 35319 / DSM 5812 / JCM 6584 / H10) (Clostridium cellulolyticum).